A 680-amino-acid polypeptide reads, in one-letter code: Protein terminal ear1 homolog (680 aa).

Positions 223 to 295 (SLVVLNSLPA…RRLVVEYTRP (73 aa)) constitute an RRM domain. Disordered regions lie at residues 294 to 415 (RPSL…SWRG) and 593 to 680 (TEPV…GYTD). Composition is skewed to low complexity over residues 328-340 (PSQS…SGSG) and 379-403 (SAAA…KQSQ). Gly residues predominate over residues 404–413 (KGGGGRGGSW). 2 stretches are compositionally biased toward low complexity: residues 602–621 (SPAP…CAAS) and 634–648 (SSSG…SSNA). Residues 656-666 (HGETGGDRGDD) are compositionally biased toward basic and acidic residues.

In terms of tissue distribution, highly expressed in shoot apex and inflorescence apex, at intermediate levels in roots and at low levels in leaf blade and leaf sheath.

Functionally, probable RNA-binding protein. Involved in the regular timing (plastochron) of lateral organs formation. May regulate the rate of leaf initiation and the duration of vegetative phase. Seems to be redundant to the function of PLASTOCHRON1, but to act in an independent pathway. In Oryza sativa subsp. indica (Rice), this protein is Protein terminal ear1 homolog (PLA2).